The primary structure comprises 400 residues: Phosphoglycerate kinase (400 aa).

Residues aspartate 21–asparagine 23, arginine 37, histidine 60–arginine 63, arginine 121, and arginine 154 each bind substrate. Residues lysine 204, glutamate 326, and glycine 355–serine 358 each bind ATP.

Belongs to the phosphoglycerate kinase family. Monomer.

It localises to the cytoplasm. The catalysed reaction is (2R)-3-phosphoglycerate + ATP = (2R)-3-phospho-glyceroyl phosphate + ADP. It participates in carbohydrate degradation; glycolysis; pyruvate from D-glyceraldehyde 3-phosphate: step 2/5. The protein is Phosphoglycerate kinase of Chloroflexus aggregans (strain MD-66 / DSM 9485).